The chain runs to 288 residues: Homoserine kinase (288 aa).

79–89 (PPARGLGSSSA) serves as a coordination point for ATP.

This sequence belongs to the GHMP kinase family. Homoserine kinase subfamily.

It localises to the cytoplasm. The catalysed reaction is L-homoserine + ATP = O-phospho-L-homoserine + ADP + H(+). It functions in the pathway amino-acid biosynthesis; L-threonine biosynthesis; L-threonine from L-aspartate: step 4/5. Functionally, catalyzes the ATP-dependent phosphorylation of L-homoserine to L-homoserine phosphate. The protein is Homoserine kinase of Listeria monocytogenes serotype 4b (strain CLIP80459).